A 1849-amino-acid polypeptide reads, in one-letter code: UPF0606 protein KIAA1549L (1849 aa).

Positions 1 to 10 are enriched in polar residues; the sequence is MDHTASQNAQ. 4 disordered regions span residues 1–70, 142–166, 213–242, and 529–586; these read MDHT…LLQL, ATANDSANPLHLSAAPENSRGPALS, PTENHASPSPVPEMPTLPAEGSDGSPPATR, and RHSV…ERNA. 2 stretches are compositionally biased toward polar residues: residues 529 to 541 and 552 to 586; these read RHSVSHPQLQLPN and PGPTSTGSLQEMLSDGTDTGSEISSDINSSPERNA. Positions 958–986 form a coiled coil; it reads KFAQTMEQRLQKAFQDAERKVLNTKSNLT. The helical transmembrane segment at 1180 to 1200 threads the bilayer; that stretch reads LWIIAAVLAPIAVVTVIIIII. 4 disordered regions span residues 1258 to 1338, 1460 to 1546, 1656 to 1679, and 1769 to 1819; these read LPIR…EEEG, SKNR…SQPS, RSTSDIGSKTRMAESTGPEPAQLH, and SRYP…APLT. Polar residues-rich tracts occupy residues 1290-1319, 1463-1482, and 1537-1546; these read PSENGSVISNESGKPSSGRRSPQNVMAQQK, RQQMKNSVYRSRQSLNSPSP, and ETSTLSSQPS. Composition is skewed to low complexity over residues 1769-1786 and 1795-1809; these read SRYPQSSPSRLPRQYSQP and QAPAPSTAASQQSLA.

The protein belongs to the UPF0606 family.

It localises to the membrane. This is UPF0606 protein KIAA1549L (KIAA1549L) from Homo sapiens (Human).